The sequence spans 131 residues: Methylglyoxal synthase (131 aa).

Residues 1-131 (MKIALIAHDK…GDLDYRKLRK (131 aa)) form the MGS-like domain. Substrate is bound by residues His8, Lys12, 34–37 (TGTT), and 54–55 (SG). Residue Asp60 is the Proton donor/acceptor of the active site. Substrate is bound at residue His87.

This sequence belongs to the methylglyoxal synthase family.

The enzyme catalyses dihydroxyacetone phosphate = methylglyoxal + phosphate. Its function is as follows. Catalyzes the formation of methylglyoxal from dihydroxyacetone phosphate. This chain is Methylglyoxal synthase, found in Bacillus mycoides (strain KBAB4) (Bacillus weihenstephanensis).